A 119-amino-acid chain; its full sequence is MKKIKEAEQRKIRRKKRIKDKIGRGIATRPRITIFKSNRYFYAQVIDDSKGHTVASISTIEKSLNLSKNIDDIKKLGEVLAKRLKEKNINNLIFDRNGYKYHGLIASFATSLREFGINI.

Belongs to the universal ribosomal protein uL18 family. As to quaternary structure, part of the 50S ribosomal subunit; part of the 5S rRNA/L5/L18/L25 subcomplex. Contacts the 5S and 23S rRNAs.

In terms of biological role, this is one of the proteins that bind and probably mediate the attachment of the 5S RNA into the large ribosomal subunit, where it forms part of the central protuberance. The protein is Large ribosomal subunit protein uL18 of Borreliella afzelii (strain PKo) (Borrelia afzelii).